An 85-amino-acid chain; its full sequence is U4-theraphotoxin-Hhn1r (85 aa).

The first 22 residues, 1 to 22 (MKVTLIAILTCAAVLVLHTTAA), serve as a signal peptide directing secretion. Positions 23–48 (EELEAESQLMEVGMPDTELAAVDEER) are excised as a propeptide. 3 disulfides stabilise this stretch: C52–C66, C56–C77, and C71–C82.

Belongs to the neurotoxin 12 (Hwtx-2) family. 02 (Hwtx-2) subfamily. In terms of tissue distribution, expressed by the venom gland.

It localises to the secreted. In terms of biological role, postsynaptic neurotoxin. The sequence is that of U4-theraphotoxin-Hhn1r from Cyriopagopus hainanus (Chinese bird spider).